A 290-amino-acid chain; its full sequence is Acetyl-coenzyme A carboxylase carboxyl transferase subunit beta (290 aa).

A CoA carboxyltransferase N-terminal domain is found at 28–290 (VMTKCPQCKK…KGGEEGWWRN (263 aa)). Residues cysteine 32, cysteine 35, cysteine 51, and cysteine 54 each coordinate Zn(2+). Residues 32–54 (CPQCKKIMYTKELIKNLRVCLSC) form a C4-type zinc finger.

It belongs to the AccD/PCCB family. Acetyl-CoA carboxylase is a heterohexamer composed of biotin carboxyl carrier protein (AccB), biotin carboxylase (AccC) and two subunits each of ACCase subunit alpha (AccA) and ACCase subunit beta (AccD). Zn(2+) serves as cofactor.

It is found in the cytoplasm. It carries out the reaction N(6)-carboxybiotinyl-L-lysyl-[protein] + acetyl-CoA = N(6)-biotinyl-L-lysyl-[protein] + malonyl-CoA. Its pathway is lipid metabolism; malonyl-CoA biosynthesis; malonyl-CoA from acetyl-CoA: step 1/1. Its function is as follows. Component of the acetyl coenzyme A carboxylase (ACC) complex. Biotin carboxylase (BC) catalyzes the carboxylation of biotin on its carrier protein (BCCP) and then the CO(2) group is transferred by the transcarboxylase to acetyl-CoA to form malonyl-CoA. The protein is Acetyl-coenzyme A carboxylase carboxyl transferase subunit beta of Geobacillus kaustophilus (strain HTA426).